The following is a 200-amino-acid chain: Ribosome maturation factor RimP (200 aa).

Belongs to the RimP family.

Its subcellular location is the cytoplasm. In terms of biological role, required for maturation of 30S ribosomal subunits. The protein is Ribosome maturation factor RimP of Polaromonas sp. (strain JS666 / ATCC BAA-500).